Here is a 263-residue protein sequence, read N- to C-terminus: Undecaprenyl-diphosphatase (263 aa).

The next 7 membrane-spanning stretches (helical) occupy residues 38 to 58, 75 to 95, 108 to 128, 135 to 155, 181 to 201, 217 to 237, and 242 to 262; these read RSDFFNIVIQAGAILAICLAL, RDYVLKIGVAFLVTAVVGLIV, PVAWALLIGGVWMLVAEHFAG, VVTWKVAIAVGLAQVVAGVFP, FVFMVGIPTMFAASGYALLEM, VAFIAATLTGFVVVKWLLGYI, and FTVFAVYRILLGAALLLWLPA.

It belongs to the UppP family.

It is found in the cell inner membrane. It catalyses the reaction di-trans,octa-cis-undecaprenyl diphosphate + H2O = di-trans,octa-cis-undecaprenyl phosphate + phosphate + H(+). Its function is as follows. Catalyzes the dephosphorylation of undecaprenyl diphosphate (UPP). Confers resistance to bacitracin. The sequence is that of Undecaprenyl-diphosphatase from Xanthomonas campestris pv. campestris (strain 8004).